Consider the following 162-residue polypeptide: Functional amyloid chaperone FapA (162 aa).

Residues 1–28 form the signal peptide; sequence MSGSSLRIVVPALLVIVGSVPVSLPAHA.

The protein belongs to the FapA family. As to quaternary structure, monomer in solution. Interacts with FapC but not FapB in vitro.

It is found in the periplasm. Its function is as follows. An intrinsically disordered chaperone for fibril amyloid FapC that guards against fibrillation within the periplasm. Upon overexpression of the endogenous six-gene locus (fapA-fapF), cells form large clumps during liquid growth, make large amounts of biofilm and produce amyloid fibrils. The polypeptide is Functional amyloid chaperone FapA (Pseudomonas aeruginosa (strain ATCC 15692 / DSM 22644 / CIP 104116 / JCM 14847 / LMG 12228 / 1C / PRS 101 / PAO1)).